The primary structure comprises 265 residues: Dimethylsulfide dehydrogenase subunit gamma (265 aa).

Positions 1-25 (MPGFRFLLAATAAFLATSPALPLSA) are cleaved as a signal peptide. Heme b-binding residues include His-81 and Met-147.

In terms of assembly, heterotrimer of alpha, beta and gamma subunits. Heme b is required as a cofactor.

The protein localises to the periplasm. May transfer electrons to the iron-sulfur centers of DdhB. This is Dimethylsulfide dehydrogenase subunit gamma (ddhC) from Rhodovulum sulfidophilum (Rhodobacter sulfidophilus).